The sequence spans 464 residues: Ribulose bisphosphate carboxylase/oxygenase activase A, chloroplastic (464 aa).

The N-terminal 48 residues, 1–48 (MAAAFSSTVGAPASTPTNFLGKKLKKQVTSAVNYHGKSSKANRFTVMA), are a transit peptide targeting the chloroplast. ATP is bound at residue 155-162 (GGKGQGKS).

This sequence belongs to the RuBisCO activase family.

It localises to the plastid. Its subcellular location is the chloroplast stroma. Its function is as follows. Activation of RuBisCO (ribulose-1,5-bisphosphate carboxylase/oxygenase; EC 4.1.1.39) involves the ATP-dependent carboxylation of the epsilon-amino group of lysine leading to a carbamate structure. In Hordeum vulgare (Barley), this protein is Ribulose bisphosphate carboxylase/oxygenase activase A, chloroplastic (RCAA).